The chain runs to 396 residues: Elongation factor Tu 2 (396 aa).

One can recognise a tr-type G domain in the interval 10–206; it reads KPHVNVGTIG…ALDTYIPTPE (197 aa). Residues 19 to 26 form a G1 region; it reads GHVDHGKT. 19–26 serves as a coordination point for GTP; that stretch reads GHVDHGKT. Mg(2+) is bound at residue T26. The tract at residues 60-64 is G2; the sequence is GITIN. Positions 81–84 are G3; the sequence is DCPG. GTP contacts are provided by residues 81–85 and 136–139; these read DCPGH and NKCD. The G4 stretch occupies residues 136 to 139; the sequence is NKCD. The tract at residues 174-176 is G5; it reads SAK.

It belongs to the TRAFAC class translation factor GTPase superfamily. Classic translation factor GTPase family. EF-Tu/EF-1A subfamily. As to quaternary structure, monomer.

Its subcellular location is the cytoplasm. The enzyme catalyses GTP + H2O = GDP + phosphate + H(+). Functionally, GTP hydrolase that promotes the GTP-dependent binding of aminoacyl-tRNA to the A-site of ribosomes during protein biosynthesis. This is Elongation factor Tu 2 from Acidovorax sp. (strain JS42).